The following is a 435-amino-acid chain: UDP-N-acetylmuramoylalanine--D-glutamate ligase (435 aa).

ATP is bound at residue 114 to 120 (GSNGKST).

Belongs to the MurCDEF family.

Its subcellular location is the cytoplasm. The catalysed reaction is UDP-N-acetyl-alpha-D-muramoyl-L-alanine + D-glutamate + ATP = UDP-N-acetyl-alpha-D-muramoyl-L-alanyl-D-glutamate + ADP + phosphate + H(+). The protein operates within cell wall biogenesis; peptidoglycan biosynthesis. Functionally, cell wall formation. Catalyzes the addition of glutamate to the nucleotide precursor UDP-N-acetylmuramoyl-L-alanine (UMA). This Haemophilus ducreyi (strain 35000HP / ATCC 700724) protein is UDP-N-acetylmuramoylalanine--D-glutamate ligase.